The primary structure comprises 129 residues: NADH-quinone oxidoreductase subunit A (129 aa).

3 consecutive transmembrane segments (helical) span residues 9 to 29 (FPIG…LGLA), 68 to 88 (LLFI…VLLL), and 97 to 117 (LGWP…AGLV).

The protein belongs to the complex I subunit 3 family. In terms of assembly, NDH-1 is composed of 14 different subunits. Subunits NuoA, H, J, K, L, M, N constitute the membrane sector of the complex.

The protein resides in the cell inner membrane. It carries out the reaction a quinone + NADH + 5 H(+)(in) = a quinol + NAD(+) + 4 H(+)(out). Its function is as follows. NDH-1 shuttles electrons from NADH, via FMN and iron-sulfur (Fe-S) centers, to quinones in the respiratory chain. The immediate electron acceptor for the enzyme in this species is believed to be ubiquinone. Couples the redox reaction to proton translocation (for every two electrons transferred, four hydrogen ions are translocated across the cytoplasmic membrane), and thus conserves the redox energy in a proton gradient. This is NADH-quinone oxidoreductase subunit A from Anaeromyxobacter dehalogenans (strain 2CP-C).